The following is a 283-amino-acid chain: Putative F-box protein At1g60370 (283 aa).

The region spanning 4–53 (GEKLESIPIDLIIEIHSRLPAESVARFRCVSKLWGSMFRRPYFTELFLTR) is the F-box domain.

This Arabidopsis thaliana (Mouse-ear cress) protein is Putative F-box protein At1g60370.